A 397-amino-acid polypeptide reads, in one-letter code: Autophagy-related protein 29 (397 aa).

A disordered region spans residues 71-397; that stretch reads ATAAVRNSGP…RSRYTSSSNQ (327 aa). Positions 230-240 are enriched in acidic residues; sequence QYEDDDDDESE. Residues 245 to 259 are compositionally biased toward polar residues; it reads PYTSPSSKTSAQDLG. A compositionally biased stretch (basic residues) spans 269–282; that stretch reads SGKRPHKSHGKPAI. 2 stretches are compositionally biased toward basic and acidic residues: residues 300–309 and 330–341; these read KPDKTDRSTE and GGKDKGYSREGS. 2 stretches are compositionally biased toward polar residues: residues 343–363 and 381–397; these read GTPS…TQSA and FSIS…SSNQ.

This sequence belongs to the ATG29 family. As to quaternary structure, forms a stable complex with ATG17 and ATG31. Interacts directly with ATG31. The ATG17-ATG29-ATG31 complex interacts with the ATG1-ATG13 complex. Note=The interaction with the ATG1-ATG13 complex is induced by starvation.

The protein resides in the preautophagosomal structure. Plays a role in autophagy. Functions at the preautophagosomal structure (PAS) in order to form normal autophagosomes under starvation conditions. Also plays a role in mitophagy. Autophagy is required for proper vegetative growth, asexual/sexual reproduction, and full virulence. Autophagy is particularly involved in the biosynthesis of deoxynivalenol (DON), an important virulence determinant. This is Autophagy-related protein 29 from Gibberella zeae (strain ATCC MYA-4620 / CBS 123657 / FGSC 9075 / NRRL 31084 / PH-1) (Wheat head blight fungus).